The primary structure comprises 324 residues: Lactonase drp35 (324 aa).

Ca(2+)-binding residues include glutamate 47, serine 109, glycine 111, aspartate 129, threonine 132, tyrosine 134, aspartate 137, asparagine 184, aspartate 235, and serine 236. Aspartate 235 serves as the catalytic Proton donor.

The protein belongs to the SMP-30/CGR1 family. The cofactor is Ca(2+).

Its subcellular location is the cytoplasm. Its function is as follows. Exhibits lactonase activity. Acts in cells with perturbed membrane integrity and is possibly related to the membrane homeostasis. The chain is Lactonase drp35 (drp35) from Staphylococcus aureus (strain USA300).